Here is a 250-residue protein sequence, read N- to C-terminus: MTRKLFVGGNWKMNGSYSHINTFFDTLQKADTDPNADIVIGVPACYLKYAQDKAPKGIKIAAENCYKVGSGAFTGEISTEMIKDCGCEWVILGHSERRHIFGESNELIGEKVKHALDSGLNVIPCIGELLSEREAGKTNDVCFAQMDAIAKNVPSKEAWDKVVIAYEPVWAIGTGKTATPAQAQEVHKVVRDWIRKHVDAGIADKVRILYGGSVTASNAKDLGTQPDVDGFLVGGASLKPDFITIINARR.

Substrate is bound by residues Asn-10 and Lys-12. His-94 (electrophile) is an active-site residue. The Proton acceptor role is filled by Glu-167.

Belongs to the triosephosphate isomerase family. As to quaternary structure, homodimer.

It localises to the cytoplasm. It carries out the reaction D-glyceraldehyde 3-phosphate = dihydroxyacetone phosphate. Its pathway is carbohydrate biosynthesis; gluconeogenesis. It functions in the pathway carbohydrate degradation; glycolysis; D-glyceraldehyde 3-phosphate from glycerone phosphate: step 1/1. This chain is Triosephosphate isomerase, found in Taenia solium (Pork tapeworm).